A 525-amino-acid chain; its full sequence is MAEPVDLDVAGPVGRPVLVVDFGAQYAQLIARRVREARVFSEVIPHTTSIEEIKARDPLALVLSGGPASVYAPGAPQLDPALFDLGLPVFGICYGFQVMAQALGGTVAHTGTSEYGRTELKVLGGDLHSDLPDIQPVWMSHGDAVTAAPDGFEVVASSAGAAVAAFENRERRLAGVQYHPEVMHTPHGQQILGRFLHDFAGIGARWTPANIANALIEQVRTQIGDGHAICGLSGGVDSAVAAALVQRAIGDRLTCVFVDHGLLRAGERAQVERDFVAATKANLVTVDVADTFLAALSGVTDPEGKRKIIGRQFIRAFEGAVRDVLDGRDIEFLVQGTLYPDVVESGGGSGTANIKSHHNVGGLPDDLKFALVEPLRLLFKDEVRAVGRELGLPEEIVARQPFPGPGLGIRIVGEVTGQRLDTLRRADSIAREELTAAGLDNQIWQCPVVLLADVRSVGVQGDNRTYGHPIVLRPVSSEDAMTADWTRVPFEVLERISTRITNEVPEVNRVVLDVTSKPPGTIEWE.

The Glutamine amidotransferase type-1 domain occupies 16-205 (PVLVVDFGAQ…LHDFAGIGAR (190 aa)). C93 serves as the catalytic Nucleophile. Residues H179 and E181 contribute to the active site. Residues 206–399 (WTPANIANAL…LGLPEEIVAR (194 aa)) form the GMPS ATP-PPase domain. 233 to 239 (SGGVDSA) is a binding site for ATP.

As to quaternary structure, homodimer.

It carries out the reaction XMP + L-glutamine + ATP + H2O = GMP + L-glutamate + AMP + diphosphate + 2 H(+). It participates in purine metabolism; GMP biosynthesis; GMP from XMP (L-Gln route): step 1/1. In terms of biological role, catalyzes the synthesis of GMP from XMP. This chain is GMP synthase [glutamine-hydrolyzing], found in Mycobacterium marinum (strain ATCC BAA-535 / M).